The following is a 487-amino-acid chain: Glutamyl-tRNA(Gln) amidotransferase subunit A (487 aa).

Lys-78 serves as the catalytic Charge relay system. Over residues 135 to 144 (SAYQTTTNPW) the composition is skewed to polar residues. A disordered region spans residues 135–155 (SAYQTTTNPWDASRVPGGSSG). Ser-153 serves as the catalytic Charge relay system. Ser-177 acts as the Acyl-ester intermediate in catalysis.

It belongs to the amidase family. GatA subfamily. Heterotrimer of A, B and C subunits.

It carries out the reaction L-glutamyl-tRNA(Gln) + L-glutamine + ATP + H2O = L-glutaminyl-tRNA(Gln) + L-glutamate + ADP + phosphate + H(+). Allows the formation of correctly charged Gln-tRNA(Gln) through the transamidation of misacylated Glu-tRNA(Gln) in organisms which lack glutaminyl-tRNA synthetase. The reaction takes place in the presence of glutamine and ATP through an activated gamma-phospho-Glu-tRNA(Gln). The sequence is that of Glutamyl-tRNA(Gln) amidotransferase subunit A from Maridesulfovibrio salexigens (strain ATCC 14822 / DSM 2638 / NCIMB 8403 / VKM B-1763) (Desulfovibrio salexigens).